The following is a 119-amino-acid chain: FAD-linked sulfhydryl oxidase (119 aa).

The region spanning 1-97 is the ERV/ALR sulfhydryl oxidase domain; the sequence is MLHWGPKYWR…ISWSEYKNIY (97 aa). Residues Cys-44 and Cys-47 are joined by a disulfide bond.

Belongs to the asfivirus B119L family. As to quaternary structure, interacts with A151R. It depends on FAD as a cofactor.

It is found in the host cytoplasm. Its subcellular location is the virion. It carries out the reaction 2 R'C(R)SH + O2 = R'C(R)S-S(R)CR' + H2O2. In terms of biological role, FAD-dependent sulfhydryl oxidase that catalyzes the formation of disulfide bonds in viral proteins produced in the cell cytoplasm. Involved in virion maturation. The protein is FAD-linked sulfhydryl oxidase of African swine fever virus (isolate Warthog/Namibia/Wart80/1980) (ASFV).